We begin with the raw amino-acid sequence, 491 residues long: UDP-GalNAc:beta-1,3-N-acetylgalactosaminyltransferase 2 (491 aa).

The Cytoplasmic portion of the chain corresponds to 1-2 (MR). Residues 3–23 (SAAAALSVCVLAVLLHWICWT) traverse the membrane as a helical; Signal-anchor for type II membrane protein segment. Over 24–491 (DRSAELLGFR…NKCGDPCGCS (468 aa)) the chain is Lumenal. Residues N167 and N230 are each glycosylated (N-linked (GlcNAc...) asparagine).

Belongs to the glycosyltransferase 31 family.

The protein resides in the golgi apparatus membrane. Its subcellular location is the endoplasmic reticulum. It catalyses the reaction 3-O-(N-acetyl-beta-D-glucosaminyl-(1-&gt;4)-alpha-D-mannosyl)-L-threonyl-[protein] + UDP-N-acetyl-alpha-D-galactosamine = 3-O-[beta-D-GalNAc-(1-&gt;3)-beta-D-GlcNAc-(1-&gt;4)-alpha-D-Man]-L-Thr-[protein] + UDP + H(+). It participates in protein modification; protein glycosylation. Beta-1,3-N-acetylgalactosaminyltransferase that synthesizes a unique carbohydrate structure, GalNAc-beta-1-3GlcNAc, on N- and O-glycans. Has no galactose nor galactosaminyl transferase activity toward any acceptor substrate. Involved in alpha-dystroglycan (dag1) glycosylation. The chain is UDP-GalNAc:beta-1,3-N-acetylgalactosaminyltransferase 2 (b3galnt2) from Danio rerio (Zebrafish).